Here is a 184-residue protein sequence, read N- to C-terminus: Photosystem I assembly protein Ycf4 (184 aa).

Helical transmembrane passes span 22-42 (FCWACILFLGSIGFLLVGISS) and 57-77 (ILFFPQGIVMCFYGIAGLFIS).

Belongs to the Ycf4 family.

It localises to the plastid. It is found in the chloroplast thylakoid membrane. Functionally, seems to be required for the assembly of the photosystem I complex. The protein is Photosystem I assembly protein Ycf4 of Illicium oligandrum (Star anise).